We begin with the raw amino-acid sequence, 197 residues long: Nucleoid occlusion factor SlmA (197 aa).

The 61-residue stretch at 7–67 (INRREHILQC…GLIEFIEESL (61 aa)) folds into the HTH tetR-type domain. Positions 30-49 (TTAKLASEVGVSEAALYRHF) form a DNA-binding region, H-T-H motif.

This sequence belongs to the nucleoid occlusion factor SlmA family. Homodimer. Interacts with FtsZ.

It is found in the cytoplasm. It localises to the nucleoid. Functionally, required for nucleoid occlusion (NO) phenomenon, which prevents Z-ring formation and cell division over the nucleoid. Acts as a DNA-associated cell division inhibitor that binds simultaneously chromosomal DNA and FtsZ, and disrupts the assembly of FtsZ polymers. SlmA-DNA-binding sequences (SBS) are dispersed on non-Ter regions of the chromosome, preventing FtsZ polymerization at these regions. In Shewanella sp. (strain MR-7), this protein is Nucleoid occlusion factor SlmA.